Reading from the N-terminus, the 174-residue chain is ATP-dependent protease subunit HslV (174 aa).

Thr2 is a catalytic residue. Positions 157, 160, and 163 each coordinate Na(+).

It belongs to the peptidase T1B family. HslV subfamily. In terms of assembly, a double ring-shaped homohexamer of HslV is capped on each side by a ring-shaped HslU homohexamer. The assembly of the HslU/HslV complex is dependent on binding of ATP.

The protein localises to the cytoplasm. The catalysed reaction is ATP-dependent cleavage of peptide bonds with broad specificity.. Allosterically activated by HslU binding. Protease subunit of a proteasome-like degradation complex believed to be a general protein degrading machinery. This Shewanella woodyi (strain ATCC 51908 / MS32) protein is ATP-dependent protease subunit HslV.